Consider the following 499-residue polypeptide: Probable cytosol aminopeptidase (499 aa).

Mn(2+) is bound by residues Lys271 and Asp276. Residue Lys283 is part of the active site. Residues Asp294, Asp353, and Glu355 each contribute to the Mn(2+) site. Residue Arg357 is part of the active site.

It belongs to the peptidase M17 family. Mn(2+) serves as cofactor.

It localises to the cytoplasm. It carries out the reaction Release of an N-terminal amino acid, Xaa-|-Yaa-, in which Xaa is preferably Leu, but may be other amino acids including Pro although not Arg or Lys, and Yaa may be Pro. Amino acid amides and methyl esters are also readily hydrolyzed, but rates on arylamides are exceedingly low.. The enzyme catalyses Release of an N-terminal amino acid, preferentially leucine, but not glutamic or aspartic acids.. Functionally, presumably involved in the processing and regular turnover of intracellular proteins. Catalyzes the removal of unsubstituted N-terminal amino acids from various peptides. This chain is Probable cytosol aminopeptidase, found in Bordetella parapertussis (strain 12822 / ATCC BAA-587 / NCTC 13253).